A 113-amino-acid polypeptide reads, in one-letter code: UPF0251 protein Teth514_1147 (113 aa).

It belongs to the UPF0251 family.

The polypeptide is UPF0251 protein Teth514_1147 (Thermoanaerobacter sp. (strain X514)).